A 314-amino-acid chain; its full sequence is Acetyl-coenzyme A carboxylase carboxyl transferase subunit beta (314 aa).

The 268-residue stretch at 44 to 311 folds into the CoA carboxyltransferase N-terminal domain; the sequence is LMNKCPHCGT…VETWQASSPL (268 aa). Residues C48, C51, C67, and C70 each contribute to the Zn(2+) site. The segment at 48–70 adopts a C4-type zinc-finger fold; it reads CPHCGTIHYSKDLEKNLRVCKGC.

Belongs to the AccD/PCCB family. In terms of assembly, acetyl-CoA carboxylase is a heterohexamer composed of biotin carboxyl carrier protein (AccB), biotin carboxylase (AccC) and two subunits each of ACCase subunit alpha (AccA) and ACCase subunit beta (AccD). Zn(2+) serves as cofactor.

Its subcellular location is the cytoplasm. It catalyses the reaction N(6)-carboxybiotinyl-L-lysyl-[protein] + acetyl-CoA = N(6)-biotinyl-L-lysyl-[protein] + malonyl-CoA. It functions in the pathway lipid metabolism; malonyl-CoA biosynthesis; malonyl-CoA from acetyl-CoA: step 1/1. Functionally, component of the acetyl coenzyme A carboxylase (ACC) complex. Biotin carboxylase (BC) catalyzes the carboxylation of biotin on its carrier protein (BCCP) and then the CO(2) group is transferred by the transcarboxylase to acetyl-CoA to form malonyl-CoA. The protein is Acetyl-coenzyme A carboxylase carboxyl transferase subunit beta of Brevibacillus brevis (strain 47 / JCM 6285 / NBRC 100599).